We begin with the raw amino-acid sequence, 107 residues long: MTKSELVAQLAARFPQLVLKDADFAVKTMLDAMSEALANGHRIEIRGFGSFGLNRRPSRVGRNPKSGEKVLVPEKYVPHFKPGKELRERVDRRAGEPLKAEEPDDDL.

Over residues 82–101 the composition is skewed to basic and acidic residues; sequence PGKELRERVDRRAGEPLKAE. Residues 82–107 form a disordered region; it reads PGKELRERVDRRAGEPLKAEEPDDDL.

This sequence belongs to the bacterial histone-like protein family. As to quaternary structure, heterodimer of an alpha and a beta chain.

This protein is one of the two subunits of integration host factor, a specific DNA-binding protein that functions in genetic recombination as well as in transcriptional and translational control. The protein is Integration host factor subunit beta of Paraburkholderia phytofirmans (strain DSM 17436 / LMG 22146 / PsJN) (Burkholderia phytofirmans).